A 1097-amino-acid chain; its full sequence is Putative regulator of nonsense transcripts 1 (1097 aa).

Low complexity predominate over residues 42–53 (SQTQTQGHTQSQ). The segment at 42–67 (SQTQTQGHTQSQLDNQLNGPDDGLHN) is disordered. The Upf1 CH-rich domain occupies 96-254 (TKDLPVHACR…NKLEELWKDN (159 aa)). Zn(2+) contacts are provided by cysteine 104, cysteine 108, cysteine 119, serine 122, cysteine 127, histidine 137, histidine 141, cysteine 147, cysteine 165, cysteine 168, cysteine 191, and cysteine 195. The segment at 104 to 137 (CRSYCGIHDPACVVYCNTSKKWFCNGRGNTSGSH) is C3H. A CC/SHH/C region spans residues 119–147 (CNTSKKWFCNGRGNTSGSHIVNHLVRAKC). A C4 region spans residues 165–195 (CYNCGCRNVFLLGFIPAKADSVVVLLCRQPC). ATP contacts are provided by residues glutamine 457, 474–481 (GPPGTGKT), tyrosine 683, and glutamate 813. The tract at residues 977 to 998 (QGQTNGPAAGRGAMKGKSGRGG) is disordered.

This sequence belongs to the DNA2/NAM7 helicase family.

Its subcellular location is the cytoplasm. The protein resides in the P-body. The catalysed reaction is ATP + H2O = ADP + phosphate + H(+). Its function is as follows. RNA-dependent helicase required for nonsense-mediated decay (NMD) of aberrant mRNAs containing premature stop codons and modulates the expression level of normal mRNAs. The formation of an rent1-rent2-rent3 surveillance complex is believed to activate NMD. The protein is Putative regulator of nonsense transcripts 1 (rent1) of Takifugu rubripes (Japanese pufferfish).